The chain runs to 297 residues: tRNA dimethylallyltransferase (297 aa).

15–22 lines the ATP pocket; it reads GPTASGKS. 17 to 22 serves as a coordination point for substrate; sequence TASGKS. 2 interaction with substrate tRNA regions span residues 40 to 43 and 164 to 168; these read DSMQ and QRIVR.

The protein belongs to the IPP transferase family. Monomer. Requires Mg(2+) as cofactor.

The enzyme catalyses adenosine(37) in tRNA + dimethylallyl diphosphate = N(6)-dimethylallyladenosine(37) in tRNA + diphosphate. Functionally, catalyzes the transfer of a dimethylallyl group onto the adenine at position 37 in tRNAs that read codons beginning with uridine, leading to the formation of N6-(dimethylallyl)adenosine (i(6)A). The polypeptide is tRNA dimethylallyltransferase (Rhizobium etli (strain CIAT 652)).